Here is a 745-residue protein sequence, read N- to C-terminus: Probable copper-transporting ATPase PacS (745 aa).

Topologically, residues 1–94 (MAQTINLQLE…PVFSAKLVTG (94 aa)) are cytoplasmic. The region spanning 3–68 (QTINLQLEGM…AVERAGYHAR (66 aa)) is the HMA domain. The a metal cation site is built by cysteine 14 and cysteine 17. A helical membrane pass occupies residues 95–115 (LVISAVLFFGSLPMMLGVNIP). Residues 116–125 (HFPHIFHDPW) lie on the Extracellular side of the membrane. The chain crosses the membrane as a helical span at residues 126-145 (LQWLLATPVQFWSGAEFYRG). The Cytoplasmic segment spans residues 146–152 (AWKSVRT). Residues 153-173 (RSATMDTLVALGTSAAYFYSV) form a helical membrane-spanning segment. Topologically, residues 174-193 (AITLFPQWLTSQGLAAHVYF) are extracellular. Residues 194–214 (EAAAVVITLILLGRSLEQRAR) form a helical membrane-spanning segment. Topologically, residues 215-342 (RETSAAIRKL…KAPIQHFVDR (128 aa)) are cytoplasmic. Residues 343 to 365 (ITHWFVPTVIVVAIAAFCIWWLT) traverse the membrane as a helical segment. At 366–372 (TGNITLA) the chain is on the extracellular side. The helical transmembrane segment at 373–390 (VLTLVEVLIIACPCALGL) threads the bilayer. At 391–543 (ATPTSVMVGT…QAQQWEKEQK (153 aa)) the chain is on the cytoplasmic side. Residue aspartate 428 is the 4-aspartylphosphate intermediate of the active site. Residues 544 to 564 (TVIWLAVDTEVKALLAIADAI) form a helical membrane-spanning segment. Topologically, residues 565–687 (KPSSPQVVQA…KLSRATMGNI (123 aa)) are extracellular. Residues aspartate 633 and aspartate 637 each contribute to the Mg(2+) site. The helical transmembrane segment at 688 to 707 (RQNLFFAFIYNVIGIPVAAG) threads the bilayer. At 708–719 (LFYPLFGLLLNP) the chain is on the cytoplasmic side. A helical membrane pass occupies residues 720 to 738 (ILAGAAMAFSSVSVVTNAL). Over 739–745 (RLKKFCP) the chain is Extracellular.

The protein belongs to the cation transport ATPase (P-type) (TC 3.A.3) family. Type IB subfamily.

It is found in the cell membrane. It carries out the reaction Cu(+)(in) + ATP + H2O = Cu(+)(out) + ADP + phosphate + H(+). Its function is as follows. May play a role in the osmotic adaptation. The chain is Probable copper-transporting ATPase PacS (pacS) from Synechocystis sp. (strain ATCC 27184 / PCC 6803 / Kazusa).